The chain runs to 256 residues: Small ribosomal subunit protein eS1 (256 aa).

Over residues 1 to 18 (MAVGKNKRLSKGKKGLKK) the composition is skewed to basic residues. Residues 1–22 (MAVGKNKRLSKGKKGLKKKTQD) form a disordered region. N-acetylalanine; partial is present on Ala2.

The protein belongs to the eukaryotic ribosomal protein eS1 family. In terms of assembly, component of the small ribosomal subunit (SSU). Mature N.crassa ribosomes consist of a small (40S) and a large (60S) subunit. The 40S small subunit contains 1 molecule of ribosomal RNA (18S rRNA) and at least 32 different proteins. The large 60S subunit contains 3 rRNA molecules (26S, 5.8S and 5S rRNA) and at least 42 different proteins.

The protein localises to the cytoplasm. Component of the ribosome, a large ribonucleoprotein complex responsible for the synthesis of proteins in the cell. The small ribosomal subunit (SSU) binds messenger RNAs (mRNAs) and translates the encoded message by selecting cognate aminoacyl-transfer RNA (tRNA) molecules. The large subunit (LSU) contains the ribosomal catalytic site termed the peptidyl transferase center (PTC), which catalyzes the formation of peptide bonds, thereby polymerizing the amino acids delivered by tRNAs into a polypeptide chain. The nascent polypeptides leave the ribosome through a tunnel in the LSU and interact with protein factors that function in enzymatic processing, targeting, and the membrane insertion of nascent chains at the exit of the ribosomal tunnel. This is Small ribosomal subunit protein eS1 (rps1) from Neurospora crassa (strain ATCC 24698 / 74-OR23-1A / CBS 708.71 / DSM 1257 / FGSC 987).